Consider the following 145-residue polypeptide: MKIVLQRSQHASVSVDGKIVGQIERGLVALIGIGHEDTEATASALADKTAGLRIFSDDNGKMERNVIDAGGDVLAISQFTLLADCRKGRRPAFTDAAPPDRANELYEHYVSELRKTGLSVPCGIFAADMAVSLTNDGPVTIILEL.

Residues 137 to 138 (GP) carry the Gly-cisPro motif, important for rejection of L-amino acids motif.

This sequence belongs to the DTD family. Homodimer.

The protein resides in the cytoplasm. It carries out the reaction glycyl-tRNA(Ala) + H2O = tRNA(Ala) + glycine + H(+). It catalyses the reaction a D-aminoacyl-tRNA + H2O = a tRNA + a D-alpha-amino acid + H(+). Its function is as follows. An aminoacyl-tRNA editing enzyme that deacylates mischarged D-aminoacyl-tRNAs. Also deacylates mischarged glycyl-tRNA(Ala), protecting cells against glycine mischarging by AlaRS. Acts via tRNA-based rather than protein-based catalysis; rejects L-amino acids rather than detecting D-amino acids in the active site. By recycling D-aminoacyl-tRNA to D-amino acids and free tRNA molecules, this enzyme counteracts the toxicity associated with the formation of D-aminoacyl-tRNA entities in vivo and helps enforce protein L-homochirality. In Rhodopirellula baltica (strain DSM 10527 / NCIMB 13988 / SH1), this protein is D-aminoacyl-tRNA deacylase.